The following is a 225-amino-acid chain: AA9 family lytic polysaccharide monooxygenase A (225 aa).

The signal sequence occupies residues 1 to 17 (MLTTTFALLTAALGVSA). Positions 18 and 85 each coordinate Cu(2+). 2 disulfides stabilise this stretch: cysteine 55-cysteine 173 and cysteine 143-cysteine 225. O2-binding residues include histidine 159 and glutamine 168. Position 170 (tyrosine 170) interacts with Cu(2+).

The protein belongs to the polysaccharide monooxygenase AA9 family. Cu(2+) is required as a cofactor.

It is found in the secreted. The enzyme catalyses [(1-&gt;4)-beta-D-glucosyl]n+m + reduced acceptor + O2 = 4-dehydro-beta-D-glucosyl-[(1-&gt;4)-beta-D-glucosyl]n-1 + [(1-&gt;4)-beta-D-glucosyl]m + acceptor + H2O.. Is able to utilize various natural phenolic compounds as reducing agents. Most of these reducing agents are present in plants, either free or as lignin building blocks, such as sinapic acid, or as flavonoids such as catechin and dopamine. Phenolic compounds with 1,2-benzenediol and 1,2,3-benzenetriol moieties yield the highest release of oxidized and non-oxidized glucooligosaccharides from cellulose compared to monophenols or sulfur-containing compounds. In terms of biological role, lytic polysaccharide monooxygenase (LPMO) that depolymerizes crystalline and amorphous polysaccharides via the oxidation of scissile alpha- or beta-(1-4)-glycosidic bonds, yielding C1 or C4 oxidation products. Catalysis by LPMOs requires the reduction of the active-site copper from Cu(II) to Cu(I) by a reducing agent and H(2)O(2) or O(2) as a cosubstrate. Shows oxidative cleavage of xylan in addition to cellulose. Shows a strong synergistic effect with endoglucanase I (EGI) with a 16-fold higher release of detected oligosaccharides. This Thermothelomyces thermophilus (strain ATCC 42464 / BCRC 31852 / DSM 1799) (Sporotrichum thermophile) protein is AA9 family lytic polysaccharide monooxygenase A.